A 207-amino-acid chain; its full sequence is LexA repressor (207 aa).

The segment at residues 28–48 (RAEIARELGFRSANAAEEHLK) is a DNA-binding region (H-T-H motif). Catalysis depends on for autocatalytic cleavage activity residues Ser-124 and Lys-161.

This sequence belongs to the peptidase S24 family. In terms of assembly, homodimer.

The enzyme catalyses Hydrolysis of Ala-|-Gly bond in repressor LexA.. In terms of biological role, represses a number of genes involved in the response to DNA damage (SOS response), including recA and lexA. In the presence of single-stranded DNA, RecA interacts with LexA causing an autocatalytic cleavage which disrupts the DNA-binding part of LexA, leading to derepression of the SOS regulon and eventually DNA repair. The protein is LexA repressor of Aliivibrio salmonicida (strain LFI1238) (Vibrio salmonicida (strain LFI1238)).